A 449-amino-acid polypeptide reads, in one-letter code: Na(+)-translocating NADH-quinone reductase subunit A (449 aa).

It belongs to the NqrA family. Composed of six subunits; NqrA, NqrB, NqrC, NqrD, NqrE and NqrF.

The catalysed reaction is a ubiquinone + n Na(+)(in) + NADH + H(+) = a ubiquinol + n Na(+)(out) + NAD(+). NQR complex catalyzes the reduction of ubiquinone-1 to ubiquinol by two successive reactions, coupled with the transport of Na(+) ions from the cytoplasm to the periplasm. NqrA to NqrE are probably involved in the second step, the conversion of ubisemiquinone to ubiquinol. The chain is Na(+)-translocating NADH-quinone reductase subunit A from Actinobacillus pleuropneumoniae serotype 3 (strain JL03).